The primary structure comprises 306 residues: D-alanine--D-alanine ligase B (306 aa).

Residues Glu-15 and Ser-150 contribute to the active site. The ATP-grasp domain maps to 101–303; it reads KLLWQGAGLP…FSQLVVRILE (203 aa). Residue 134–189 participates in ATP binding; sequence ISSLGLPVIVKPSREGSSVGMSKVVAENALQDALRLAFQHDEEVLIEKWLSGPEFT. Positions 257, 270, and 272 each coordinate Mg(2+). Ser-281 is a catalytic residue.

The protein belongs to the D-alanine--D-alanine ligase family. In terms of assembly, monomer. The cofactor is Mg(2+). Mn(2+) is required as a cofactor.

The protein resides in the cytoplasm. The catalysed reaction is 2 D-alanine + ATP = D-alanyl-D-alanine + ADP + phosphate + H(+). It functions in the pathway cell wall biogenesis; peptidoglycan biosynthesis. Its function is as follows. Cell wall formation. The protein is D-alanine--D-alanine ligase B of Escherichia coli O6:H1 (strain CFT073 / ATCC 700928 / UPEC).